A 477-amino-acid chain; its full sequence is Glutamate--tRNA ligase (477 aa).

The 'HIGH' region signature appears at 8–18 (PSPTGTLHIGT). Residues 247 to 251 (KLSKR) carry the 'KMSKS' region motif. Position 250 (lysine 250) interacts with ATP.

It belongs to the class-I aminoacyl-tRNA synthetase family. Glutamate--tRNA ligase type 1 subfamily. In terms of assembly, monomer.

Its subcellular location is the cytoplasm. It catalyses the reaction tRNA(Glu) + L-glutamate + ATP = L-glutamyl-tRNA(Glu) + AMP + diphosphate. In terms of biological role, catalyzes the attachment of glutamate to tRNA(Glu) in a two-step reaction: glutamate is first activated by ATP to form Glu-AMP and then transferred to the acceptor end of tRNA(Glu). This Parasynechococcus marenigrum (strain WH8102) protein is Glutamate--tRNA ligase.